Consider the following 311-residue polypeptide: Putative protease MJ0651 (311 aa).

Serine 128 (nucleophile) is an active-site residue. Lysine 180 functions as the Proton donor/acceptor in the catalytic mechanism.

The protein belongs to the peptidase S49 family.

This Methanocaldococcus jannaschii (strain ATCC 43067 / DSM 2661 / JAL-1 / JCM 10045 / NBRC 100440) (Methanococcus jannaschii) protein is Putative protease MJ0651.